A 509-amino-acid chain; its full sequence is Coiled-coil domain-containing protein 181 (509 aa).

The segment covering 60-82 (EHTKQHSDPDKSLQDDVSPRRND) has biased composition (basic and acidic residues). 2 disordered regions span residues 60-121 (EHTK…EEDE) and 285-367 (GEPL…EEKE). Residues 320 to 334 (RTQSARISPVTSTYC) are compositionally biased toward polar residues. Positions 335-375 (LSPRQKELQKQLEQKREKLKREEEQRKIEEEKEKKRENDIV) form a coiled coil. Residues 338-367 (RQKELQKQLEQKREKLKREEEQRKIEEEKE) show a composition bias toward basic and acidic residues.

It belongs to the CCDC181 family. As to quaternary structure, homodimer. Interacts with HOOK1. Interacts with HOOK2. Interacts with HOOK3.

The protein localises to the cytoplasm. The protein resides in the cytoskeleton. It is found in the cell projection. Its subcellular location is the cilium. It localises to the flagellum. Microtubule-binding protein that localizes to the microtubular manchette of elongating spermatids. The polypeptide is Coiled-coil domain-containing protein 181 (Macaca fascicularis (Crab-eating macaque)).